The sequence spans 336 residues: Glycerol-3-phosphate dehydrogenase [NAD(P)+] (336 aa).

The NADPH site is built by Ser-11, Trp-12, Arg-32, and Lys-106. Residues Lys-106 and Gly-136 each contribute to the sn-glycerol 3-phosphate site. Residue Ala-140 coordinates NADPH. Residues Lys-191, Asp-244, Ser-254, Arg-255, and Asn-256 each coordinate sn-glycerol 3-phosphate. The active-site Proton acceptor is the Lys-191. Arg-255 serves as a coordination point for NADPH. Val-279 and Glu-281 together coordinate NADPH.

The protein belongs to the NAD-dependent glycerol-3-phosphate dehydrogenase family.

It localises to the cytoplasm. It catalyses the reaction sn-glycerol 3-phosphate + NAD(+) = dihydroxyacetone phosphate + NADH + H(+). The catalysed reaction is sn-glycerol 3-phosphate + NADP(+) = dihydroxyacetone phosphate + NADPH + H(+). The protein operates within membrane lipid metabolism; glycerophospholipid metabolism. In terms of biological role, catalyzes the reduction of the glycolytic intermediate dihydroxyacetone phosphate (DHAP) to sn-glycerol 3-phosphate (G3P), the key precursor for phospholipid synthesis. This is Glycerol-3-phosphate dehydrogenase [NAD(P)+] from Frankia casuarinae (strain DSM 45818 / CECT 9043 / HFP020203 / CcI3).